The sequence spans 1327 residues: MRESFASLLATGAGKLALSLLFAATPFTSAYTFNQVPSPNLDISNLGRIAFAGDFDSISLYEYEGQTQETPSRNGTLLSRYPNGVFASINTTDADIKAMCNLRINDTERIVFAGNFTGVGNMPTPGGIALLNTTDGRVRALDGLDGTVNTLYCDKSGGQVYVGGLFNGLNSSNAIIWKDGWQELDFNGFNGAVHSIAQAAGGNIIFGGEFTGIGRGNASVASENATQIIPISSANISAQTNSGLPGFTDPKVIACKSDYSSGGAGQTWLLANNAPGFWKADFGFGFEPTRLKMYNTDFEGRGTKTFRFTALPDGGIMNMSYVDPSNGRTAYCDARCPLPQGNKTAQDFTFVNVVGMNSFRVDISEWYGSGAGLNGIQLFQDAMFSYAVNDFNEAQNCGASGTLSKASSTGNWQVSPSHNSNSQYLTTVLQGDPIRPDAASVTFSPDIKQSGNYSVTIYTPGCQGDGTCGSRGRVNVTATIGQGQSEEAILWQTNNFDKYDEVYNGYIDAAGGFQPSVILRPASGQGPGPLTVVAQRVRFTLLKATSGNINGLFEYKPGEKLDENNLADSVINAAGASLDPRGKALITSVSSSGQNLYVAGNFSNNDGRNNIFSFKQGASDPTALPNRGLNRQVMTLYQNDSMLYVGGNFTNTGEGNVQGLNGVAALVNDKWQPLGAGVNGVVLYLVPFSLNVTANQPEQVLAVSGFFDSVNEFNGNPSTNVQDFAVWVPSRSNWLHNLDFFTLAMSGRLMTFADVPGGERWFGGSVSSGSLLASGTAELNNGDDALSLEAFPVNLQAQQSGEAGVPSRKRAILEGQDMSTTGVRTGKFHTEGNNNMTILAGHFSTTGTDQQNITNLVIVDGGDSDKITGFSDELDANSTFTALAVTSNNILFAGGMVTGRLDNSRVAGLVTYDLTAKRFTPVQPPPLQGPNITVNAIAPRPNSNDVFVAGQFLTAGSLGCAAVCIWNTERNQWNSPGNSLSGVVSSLTWISDTQMYISGNLTSGDNVTTILSFNPSNNQFTAIPGAINLPGPVNALTIANEDGSQFWAAGQGSDGTAYLQRYNGEQQWMPVDSALFGPGTDIRGIQVIQVSENHESSDLISDNEDLLLMGQIQIPNFGTVSAALFNGTNLVPFLLATKGADGQTTDGSLSSIFVEFPAFFSQQNGKHLALWAIVLIGLAIALVLTFLLVVAGILLEWYRNKAKGYSPAPQSYPDRMGNVGRLPPEQLFGTLSVPRSRPTNYLFTCTALCIGMDVPTIHRRCNPVAHHKQLPAWTEQVRTEQTTETRPAINEDGCGTSIGGLLFRLPFSRARRISGDDVFDTILACSS.

The first 30 residues, 1–30 (MRESFASLLATGAGKLALSLLFAATPFTSA), serve as a signal peptide directing secretion. Topologically, residues 31–1169 (YTFNQVPSPN…FSQQNGKHLA (1139 aa)) are extracellular. 17 N-linked (GlcNAc...) asparagine glycosylation sites follow: asparagine 74, asparagine 90, asparagine 105, asparagine 115, asparagine 132, asparagine 170, asparagine 217, asparagine 224, asparagine 235, asparagine 318, asparagine 342, asparagine 452, asparagine 475, asparagine 601, asparagine 639, asparagine 648, and asparagine 691. The Kelch 1 repeat unit spans residues 595–641 (NLYVAGNFSNNDGRNNIFSFKQGASDPTALPNRGLNRQVMTLYQNDS). Residues 699-754 (QVLAVSGFFDSVNEFNGNPSTNVQDFAVWVPSRSNWLHNLDFFTLAMSGRLMTFAD) form a Kelch 2 repeat. N-linked (GlcNAc...) asparagine glycosylation is found at asparagine 835, asparagine 852, asparagine 877, and asparagine 931. Kelch repeat units lie at residues 945 to 993 (DVFV…ISDT) and 994 to 1040 (QMYI…TIAN). Asparagine 1000, asparagine 1006, and asparagine 1126 each carry an N-linked (GlcNAc...) asparagine glycan. Residues 1170-1190 (LWAIVLIGLAIALVLTFLLVV) traverse the membrane as a helical segment. Residues 1191 to 1327 (AGILLEWYRN…VFDTILACSS (137 aa)) are Cytoplasmic-facing.

It belongs to the RAX2 family.

Its subcellular location is the cell membrane. In terms of biological role, has been identified within the cluster that mediates the biosynthesis of squalestatin, but as its expression does not follow that of the other cluster members and it is not conserved in close related clusters, L1 seems not to be involved in the biosynthesis of squalestatin. Probably plays a role as a cell polarity regulator. In Phoma sp. (strain ATCC 20986 / MF5453), this protein is Polarized growth protein L1.